An 807-amino-acid chain; its full sequence is Sucrose synthase 1 (807 aa).

Residues 272-748 (MMFNVVILSP…GLKRIYEKYT (477 aa)) form a GT-B glycosyltransferase region.

This sequence belongs to the glycosyltransferase 1 family. Plant sucrose synthase subfamily. Forms homotetramers. In endosperm it forms both homotetramers and heterotetramers with SS2, all three possible heterotetramers are formed. As to expression, highly expressed in developing endosperm and in roots and, at lower levels, in coleoptiles and aleurone. In 3 day old roots it is detected in cap cells and along the vascular strand, starting just after the meristemic region. In 9 day old leaves it is found in the phloem. In seeds it is distributed throughout the endosperm and also found in the assimilate-unloading tissues, the nucellar projection, the vascular area and at a high concentration in the chalazal region.

The enzyme catalyses an NDP-alpha-D-glucose + D-fructose = a ribonucleoside 5'-diphosphate + sucrose + H(+). Sucrose-cleaving enzyme that provides UDP-glucose and fructose for various metabolic pathways. The polypeptide is Sucrose synthase 1 (SS1) (Hordeum vulgare (Barley)).